The primary structure comprises 393 residues: NAD(P)H-quinone oxidoreductase subunit H, chloroplastic (393 aa).

It belongs to the complex I 49 kDa subunit family. NDH is composed of at least 16 different subunits, 5 of which are encoded in the nucleus.

The protein resides in the plastid. It is found in the chloroplast thylakoid membrane. It carries out the reaction a plastoquinone + NADH + (n+1) H(+)(in) = a plastoquinol + NAD(+) + n H(+)(out). It catalyses the reaction a plastoquinone + NADPH + (n+1) H(+)(in) = a plastoquinol + NADP(+) + n H(+)(out). NDH shuttles electrons from NAD(P)H:plastoquinone, via FMN and iron-sulfur (Fe-S) centers, to quinones in the photosynthetic chain and possibly in a chloroplast respiratory chain. The immediate electron acceptor for the enzyme in this species is believed to be plastoquinone. Couples the redox reaction to proton translocation, and thus conserves the redox energy in a proton gradient. In Helianthus annuus (Common sunflower), this protein is NAD(P)H-quinone oxidoreductase subunit H, chloroplastic.